The sequence spans 163 residues: Crossover junction endodeoxyribonuclease RuvC (163 aa).

Residues Asp9, Glu76, and Asp148 contribute to the active site. Residues Asp9, Glu76, and Asp148 each coordinate Mg(2+).

This sequence belongs to the RuvC family. In terms of assembly, homodimer which binds Holliday junction (HJ) DNA. The HJ becomes 2-fold symmetrical on binding to RuvC with unstacked arms; it has a different conformation from HJ DNA in complex with RuvA. In the full resolvosome a probable DNA-RuvA(4)-RuvB(12)-RuvC(2) complex forms which resolves the HJ. Mg(2+) is required as a cofactor.

Its subcellular location is the cytoplasm. It carries out the reaction Endonucleolytic cleavage at a junction such as a reciprocal single-stranded crossover between two homologous DNA duplexes (Holliday junction).. The RuvA-RuvB-RuvC complex processes Holliday junction (HJ) DNA during genetic recombination and DNA repair. Endonuclease that resolves HJ intermediates. Cleaves cruciform DNA by making single-stranded nicks across the HJ at symmetrical positions within the homologous arms, yielding a 5'-phosphate and a 3'-hydroxyl group; requires a central core of homology in the junction. The consensus cleavage sequence is 5'-(A/T)TT(C/G)-3'. Cleavage occurs on the 3'-side of the TT dinucleotide at the point of strand exchange. HJ branch migration catalyzed by RuvA-RuvB allows RuvC to scan DNA until it finds its consensus sequence, where it cleaves and resolves the cruciform DNA. The sequence is that of Crossover junction endodeoxyribonuclease RuvC from Trichormus variabilis (strain ATCC 29413 / PCC 7937) (Anabaena variabilis).